We begin with the raw amino-acid sequence, 100 residues long: Large ribosomal subunit protein bL21 (100 aa).

Belongs to the bacterial ribosomal protein bL21 family. Part of the 50S ribosomal subunit. Contacts protein L20.

This protein binds to 23S rRNA in the presence of protein L20. The polypeptide is Large ribosomal subunit protein bL21 (Mycoplasmoides gallisepticum (strain R(low / passage 15 / clone 2)) (Mycoplasma gallisepticum)).